Here is a 399-residue protein sequence, read N- to C-terminus: Glutathione-independent formaldehyde dehydrogenase (399 aa).

A Zn(2+)-binding site is contributed by cysteine 47. Glycine 48, serine 49, and histidine 52 together coordinate NAD(+). Positions 68, 98, 101, 104, 112, and 170 each coordinate Zn(2+). Residues valine 198, aspartate 218, arginine 223, valine 263, arginine 268, histidine 270, proline 300, leucine 302, glycine 337, and threonine 339 each coordinate NAD(+).

This sequence belongs to the zinc-containing alcohol dehydrogenase family. In terms of assembly, homotetramer. The cofactor is Zn(2+).

It carries out the reaction formaldehyde + NAD(+) + H2O = formate + NADH + 2 H(+). The enzyme catalyses acetaldehyde + NAD(+) + H2O = acetate + NADH + 2 H(+). The catalysed reaction is 2 formaldehyde + H2O = methanol + formate + H(+). Inactivated by bipyridine and p-chloromercuribenzoate. Dehydrogenase that catalyzes the NAD(+)-dependent oxidation of formaldehyde and acetaldehyde, and, to a lesser extent, long-chain alcohols, but is inactive against propionaldehyde, butyraldehyde, methanol and ethanol. Can also catalyze the dismutation of a wide range of aldehydes such as formaldehyde. The chain is Glutathione-independent formaldehyde dehydrogenase from Pseudomonas putida (Arthrobacter siderocapsulatus).